A 467-amino-acid chain; its full sequence is Rhamnulokinase (467 aa).

An ATP-binding site is contributed by 11-15; that stretch reads ASSGR. Residues Ala-78 and 235-237 each bind substrate; that span reads HDT. Residue Asp-236 is the Proton acceptor of the active site. Thr-257 contributes to the ATP binding site. Position 294 (Asn-294) interacts with substrate. Position 302 (Gln-302) interacts with ATP. A disulfide bridge connects residues Cys-351 and Cys-368. Residue Gly-400 participates in ATP binding.

This sequence belongs to the rhamnulokinase family. Mg(2+) serves as cofactor.

It carries out the reaction L-rhamnulose + ATP = L-rhamnulose 1-phosphate + ADP + H(+). It participates in carbohydrate degradation; L-rhamnose degradation; glycerone phosphate from L-rhamnose: step 2/3. In terms of biological role, involved in the catabolism of L-rhamnose (6-deoxy-L-mannose). Catalyzes the transfer of the gamma-phosphate group from ATP to the 1-hydroxyl group of L-rhamnulose to yield L-rhamnulose 1-phosphate. The chain is Rhamnulokinase from Halalkalibacterium halodurans (strain ATCC BAA-125 / DSM 18197 / FERM 7344 / JCM 9153 / C-125) (Bacillus halodurans).